Here is a 158-residue protein sequence, read N- to C-terminus: Rhombotin-2 (158 aa).

LIM zinc-binding domains follow at residues 30 to 89 (CGGC…RLFG) and 94 to 153 (CASC…EWTK).

In terms of assembly, interacts with BEX2 and KDM5A. Interacts via its LIM domains with ELF2 and LDB1. Also interacts with basic helix-loop-helix protein TAL1/SCL and can assemble in a complex with LMO2 and TAL1/SCL. Expressed in early mouse development in central nervous system, lung, kidney, liver and spleen but only very low levels occur in thymus.

It is found in the nucleus. Functionally, acts with TAL1/SCL to regulate red blood cell development. Also acts with LDB1 to maintain erythroid precursors in an immature state. This Mus musculus (Mouse) protein is Rhombotin-2 (Lmo2).